Reading from the N-terminus, the 284-residue chain is Pseudouridine-5'-phosphate glycosidase (284 aa).

The active-site Proton donor is E17. The substrate site is built by K77 and V97. D126 lines the Mn(2+) pocket. 128–130 (SQD) is a binding site for substrate. The active-site Nucleophile is K147.

This sequence belongs to the pseudouridine-5'-phosphate glycosidase family. In terms of assembly, homotrimer. Mn(2+) serves as cofactor.

The enzyme catalyses D-ribose 5-phosphate + uracil = psi-UMP + H2O. In terms of biological role, catalyzes the reversible cleavage of pseudouridine 5'-phosphate (PsiMP) to ribose 5-phosphate and uracil. Functions biologically in the cleavage direction, as part of a pseudouridine degradation pathway. The sequence is that of Pseudouridine-5'-phosphate glycosidase from Thermotoga petrophila (strain ATCC BAA-488 / DSM 13995 / JCM 10881 / RKU-1).